The following is a 728-amino-acid chain: 1,4-alpha-glucan branching enzyme GlgB (728 aa).

The active-site Nucleophile is the D405. Residue E458 is the Proton donor of the active site.

This sequence belongs to the glycosyl hydrolase 13 family. GlgB subfamily. Monomer.

The catalysed reaction is Transfers a segment of a (1-&gt;4)-alpha-D-glucan chain to a primary hydroxy group in a similar glucan chain.. It functions in the pathway glycan biosynthesis; glycogen biosynthesis. Catalyzes the formation of the alpha-1,6-glucosidic linkages in glycogen by scission of a 1,4-alpha-linked oligosaccharide from growing alpha-1,4-glucan chains and the subsequent attachment of the oligosaccharide to the alpha-1,6 position. This chain is 1,4-alpha-glucan branching enzyme GlgB, found in Salmonella typhi.